A 165-amino-acid chain; its full sequence is Growth arrest and DNA damage-inducible protein GADD45 alpha (165 aa).

Thr2 is subject to Phosphothreonine.

This sequence belongs to the GADD45 family. In terms of assembly, interacts with AURKA, PCNA, GADD45GIP1 and MAPK14.

It is found in the nucleus. In terms of biological role, might affect PCNA interaction with some CDK (cell division protein kinase) complexes; stimulates DNA excision repair in vitro and inhibits entry of cells into S phase. In T-cells, functions as a regulator of p38 MAPKs by inhibiting p88 phosphorylation and activity. The chain is Growth arrest and DNA damage-inducible protein GADD45 alpha (GADD45A) from Felis catus (Cat).